A 44-amino-acid polypeptide reads, in one-letter code: SPbeta prophage-derived uncharacterized protein YosI (44 aa).

The chain is SPbeta prophage-derived uncharacterized protein YosI (yosI) from Bacillus subtilis (strain 168).